A 467-amino-acid chain; its full sequence is ATP-dependent protease ATPase subunit HslU (467 aa).

Residues Val-22 and 64-69 (GVGKTE) contribute to the ATP site. The interval 146–185 (KASNNSNPLESLLGGAIPNFGNNDDEEEETPTEEIKTKRS) is disordered. A compositionally biased stretch (acidic residues) spans 168–177 (NDDEEEETPT). Residues Asp-280, Glu-345, and Arg-417 each contribute to the ATP site.

This sequence belongs to the ClpX chaperone family. HslU subfamily. A double ring-shaped homohexamer of HslV is capped on each side by a ring-shaped HslU homohexamer. The assembly of the HslU/HslV complex is dependent on binding of ATP.

It localises to the cytoplasm. In terms of biological role, ATPase subunit of a proteasome-like degradation complex; this subunit has chaperone activity. The binding of ATP and its subsequent hydrolysis by HslU are essential for unfolding of protein substrates subsequently hydrolyzed by HslV. HslU recognizes the N-terminal part of its protein substrates and unfolds these before they are guided to HslV for hydrolysis. This chain is ATP-dependent protease ATPase subunit HslU, found in Staphylococcus haemolyticus (strain JCSC1435).